Here is a 436-residue protein sequence, read N- to C-terminus: Eukaryotic peptide chain release factor subunit 1 (436 aa).

The protein belongs to the eukaryotic release factor 1 family. In terms of assembly, heterodimer of two subunits, one of which binds GTP.

It localises to the cytoplasm. Its function is as follows. Directs the termination of nascent peptide synthesis (translation) in response to the termination codon UGA. In L.striatus UAA and UAG codes for glutamine. The sequence is that of Eukaryotic peptide chain release factor subunit 1 (eRF1) from Loxodes striatus.